Here is a 940-residue protein sequence, read N- to C-terminus: Valine--tRNA ligase (940 aa).

The 'HIGH' region motif lies at 47–57; it reads PNVTGVLHMGH. The short motif at 564-568 is the 'KMSKS' region element; the sequence is KLSKS. Residue Lys-567 coordinates ATP. A coiled-coil region spans residues 873 to 905; the sequence is EEHLLKEKGRLEKERVRLERAVENLERLLGDES.

Belongs to the class-I aminoacyl-tRNA synthetase family. ValS type 1 subfamily. In terms of assembly, monomer.

It localises to the cytoplasm. The catalysed reaction is tRNA(Val) + L-valine + ATP = L-valyl-tRNA(Val) + AMP + diphosphate. Its function is as follows. Catalyzes the attachment of valine to tRNA(Val). As ValRS can inadvertently accommodate and process structurally similar amino acids such as threonine, to avoid such errors, it has a 'posttransfer' editing activity that hydrolyzes mischarged Thr-tRNA(Val) in a tRNA-dependent manner. This is Valine--tRNA ligase from Chlamydia pneumoniae (Chlamydophila pneumoniae).